We begin with the raw amino-acid sequence, 239 residues long: UDP-2,3-diacylglucosamine hydrolase (239 aa).

Mn(2+) is bound by residues Asp-8, His-10, Asp-41, Asn-78, and His-113. Residue 78–79 participates in substrate binding; sequence NR. Residues Asp-121, Ser-159, Asn-163, Lys-166, and His-194 each coordinate substrate. His-194 and His-196 together coordinate Mn(2+).

It belongs to the LpxH family. It depends on Mn(2+) as a cofactor.

It localises to the cell inner membrane. The catalysed reaction is UDP-2-N,3-O-bis[(3R)-3-hydroxytetradecanoyl]-alpha-D-glucosamine + H2O = 2-N,3-O-bis[(3R)-3-hydroxytetradecanoyl]-alpha-D-glucosaminyl 1-phosphate + UMP + 2 H(+). Its pathway is glycolipid biosynthesis; lipid IV(A) biosynthesis; lipid IV(A) from (3R)-3-hydroxytetradecanoyl-[acyl-carrier-protein] and UDP-N-acetyl-alpha-D-glucosamine: step 4/6. In terms of biological role, hydrolyzes the pyrophosphate bond of UDP-2,3-diacylglucosamine to yield 2,3-diacylglucosamine 1-phosphate (lipid X) and UMP by catalyzing the attack of water at the alpha-P atom. Involved in the biosynthesis of lipid A, a phosphorylated glycolipid that anchors the lipopolysaccharide to the outer membrane of the cell. This Shewanella oneidensis (strain ATCC 700550 / JCM 31522 / CIP 106686 / LMG 19005 / NCIMB 14063 / MR-1) protein is UDP-2,3-diacylglucosamine hydrolase.